Here is an 811-residue protein sequence, read N- to C-terminus: G-type lectin S-receptor-like serine/threonine-protein kinase LECRK2 (811 aa).

The first 23 residues, 1 to 23 (MAPILFLPILQILLIYCTKSAQA), serve as a signal peptide directing secretion. The region spanning 24 to 153 (QLNISIGSSL…DGATKWESFG (130 aa)) is the Bulb-type lectin domain. Residues 24–464 (QLNISIGSSL…DKKYWILGSS (441 aa)) lie on the Extracellular side of the membrane. N-linked (GlcNAc...) asparagine glycans are attached at residues asparagine 26, asparagine 39, asparagine 59, asparagine 219, asparagine 226, asparagine 237, and asparagine 242. The EGF-like; atypical domain maps to 292 to 344 (PENICQTIQTKVGSGACGFNSYCTFDGTKNTTNCLCPQRYKFFDNERTYKGCR). Cystine bridges form between cysteine 296-cysteine 314, cysteine 308-cysteine 325, cysteine 327-cysteine 343, cysteine 389-cysteine 411, and cysteine 393-cysteine 399. N-linked (GlcNAc...) asparagine glycosylation occurs at asparagine 321. The PAN domain maps to 352 to 436 (CDLDETAAMV…LQATVLLKVP (85 aa)). Residues 465-485 (LFFGSSVLVNFLLIFVLLFGT) traverse the membrane as a helical segment. Over 486–811 (YCSITSRKKT…DPSSYISSLA (326 aa)) the chain is Cytoplasmic. In terms of domain architecture, Protein kinase spans 521–795 (GGFHEVLGTG…KVMQMLDGAV (275 aa)). Residues 527–535 (LGTGASGIV) and lysine 551 contribute to the ATP site. Catalysis depends on aspartate 645, which acts as the Proton acceptor.

The protein belongs to the protein kinase superfamily. Ser/Thr protein kinase family.

It localises to the membrane. The catalysed reaction is L-seryl-[protein] + ATP = O-phospho-L-seryl-[protein] + ADP + H(+). The enzyme catalyses L-threonyl-[protein] + ATP = O-phospho-L-threonyl-[protein] + ADP + H(+). Involved in resistance against the herbivorous insect brown planthopper (N.lugens, BPH). Member of the BPH3 (BPH resistance locus 3) cluster which contains LECRK1, LECRK2 and LECRK3. This Oryza sativa subsp. indica (Rice) protein is G-type lectin S-receptor-like serine/threonine-protein kinase LECRK2.